Consider the following 319-residue polypeptide: Taste receptor type 2 member 30 (319 aa).

Residue Met-1 is a topological domain, extracellular. The helical transmembrane segment at 2–22 (ITFLPIIFSILIVVIFVVGNF) threads the bilayer. The Cytoplasmic portion of the chain corresponds to 23–46 (ANGFIALVNSIEWVKRQKISFVDQ). The helical transmembrane segment at 47–67 (ILTALAVSRVGLLWVLLLHWY) threads the bilayer. Over 68–86 (ATQLNPAFYSVEVRITVYN) the chain is Extracellular. The chain crosses the membrane as a helical span at residues 87-107 (VWAVTNHFSSWLATSLSMFYL). At 108 to 126 (LKIANFSNLIFLRIKRRVK) the chain is on the cytoplasmic side. Residues 127 to 147 (SVVLVILLGPLLFLVCHLFVI) traverse the membrane as a helical segment. The Extracellular portion of the chain corresponds to 148-178 (NMDETIWTKEYEGNMTWKIKLKSAMYHSNMT). N-linked (GlcNAc...) asparagine glycosylation is found at Asn-161 and Asn-176. Residues 179-199 (LTILANFVPLTLTLISFLLLI) traverse the membrane as a helical segment. Topologically, residues 200 to 229 (CSLCKHLKKMQLHGKGSQDPSTKVHIKALQ) are cytoplasmic. The helical transmembrane segment at 230–250 (TVTSFLLLCAIYFLSMIISVC) threads the bilayer. At 251 to 259 (NLGRLQKQP) the chain is on the extracellular side. Residues 260 to 280 (VFMFCQAIIFSYPSTHPFILI) traverse the membrane as a helical segment. The Cytoplasmic portion of the chain corresponds to 281–319 (LGNKKLKQIFLSVLWHVRYWVKDRSLRLHRFTRAALCKG).

This sequence belongs to the G-protein coupled receptor T2R family.

Its subcellular location is the membrane. In terms of biological role, receptor that may play a role in the perception of bitterness and is gustducin-linked. May play a role in sensing the chemical composition of the gastrointestinal content. The activity of this receptor may stimulate alpha gustducin, mediate PLC-beta-2 activation and lead to the gating of TRPM5. The protein is Taste receptor type 2 member 30 (TAS2R30) of Pan paniscus (Pygmy chimpanzee).